The sequence spans 172 residues: MDLQTYIRSIPDFPKPGILFRDINPLLRNPAAMVEVMRRLGAICDAVQPDLIVGIESRGFIVGTPLALQRSLGFVPVRKPGKLPGAVIGVDYALEYGTDRLEIQSDALTGNPRVLVVDDLLATGGTAAATGSLVRAAGGELVGFAFVIELEPLGGRSALPDEVLAESLIRYP.

The protein belongs to the purine/pyrimidine phosphoribosyltransferase family. As to quaternary structure, homodimer.

The protein localises to the cytoplasm. It catalyses the reaction AMP + diphosphate = 5-phospho-alpha-D-ribose 1-diphosphate + adenine. It functions in the pathway purine metabolism; AMP biosynthesis via salvage pathway; AMP from adenine: step 1/1. Functionally, catalyzes a salvage reaction resulting in the formation of AMP, that is energically less costly than de novo synthesis. The chain is Adenine phosphoribosyltransferase from Parasynechococcus marenigrum (strain WH8102).